Here is a 418-residue protein sequence, read N- to C-terminus: Dwarfin sma-2 (418 aa).

An MH1 domain is found at 8-134; sequence KKITERLKWK…YKRVHATGVL (127 aa). Zn(2+) is bound by residues Cys62, Cys107, Cys119, and His124. The MH2 domain occupies 222–418; the sequence is WATVSYYELN…PTPRPISSIS (197 aa).

Belongs to the dwarfin/SMAD family.

It localises to the cytoplasm. The protein localises to the nucleus. Its function is as follows. Involved in TGF-beta pathway. Plays a role in male tail tip morphogenesis. In Caenorhabditis elegans, this protein is Dwarfin sma-2.